Reading from the N-terminus, the 368-residue chain is Ethanol acetyltransferase 1 (368 aa).

A mitochondrion-targeting transit peptide spans Met1–Tyr21. Residues Pro67–Pro171 enclose the AB hydrolase-1 domain. Residues Ser140, Asp164, and His315 each act as charge relay system in the active site. Positions Arg344–Leu368 are disordered. Polar residues predominate over residues Pro348–Leu368.

This sequence belongs to the AB hydrolase superfamily.

The protein localises to the mitochondrion. It catalyses the reaction ethanol + acetyl-CoA = ethyl acetate + CoA. It carries out the reaction acetyl-CoA + H2O = acetate + CoA + H(+). The catalysed reaction is ethyl acetate + H2O = ethanol + acetate + H(+). Functionally, alcohol acetyltransferase that catalyzes the synthesis of ethyl acetate from ethanol and acetyl-CoA. Can also function as a thioesterase by hydrolyzing acetyl-CoA in the absence of ethanol, as well as esterase hydrolyzing ethyl acetate. This is Ethanol acetyltransferase 1 (EAT1) from Kluyveromyces lactis (strain ATCC 8585 / CBS 2359 / DSM 70799 / NBRC 1267 / NRRL Y-1140 / WM37) (Yeast).